We begin with the raw amino-acid sequence, 246 residues long: Complement C1q subcomponent subunit C (246 aa).

A signal peptide spans 1 to 29 (MVVGPSCQPPCGLCLLLLFLLALPLRSQA). The Collagen-like domain occupies 32-113 (GCYGIPGMPG…GPPGEPGVEG (82 aa)). 4-hydroxyproline occurs at positions 37, 40, 43, 46, and 64. The disordered stretch occupies residues 44–116 (GAPGKDGHDG…GEPGVEGRYK (73 aa)). The residue at position 76 (K76) is a 5-hydroxylysine. Residue K76 is glycosylated (O-linked (Gal...) hydroxylysine). 4 positions are modified to 4-hydroxyproline: P82, P97, P100, and P106. A compositionally biased stretch (pro residues) spans 99 to 108 (DPGPRGPPGE). The C1q domain occupies 116 to 246 (KQKHQSVFTV…VFSGFLLFPD (131 aa)). C180 and C194 are disulfide-bonded.

Core component of the complement C1 complex, a calcium-dependent complex composed of 1 molecule of the C1Q subcomplex, 2 molecules of C1R and 2 molecules of C1S. The C1Q subcomplex is composed 18 subunits: 3 chains of C1QA, C1QB, and C1QC trimerize to form 6 collagen-like triple helices connected to six globular ligand-recognition modules (C1q domain). In terms of processing, O-linked glycans consist of Glc-Gal disaccharides bound to the oxygen atom of post-translationally added hydroxyl groups.

The protein localises to the secreted. It is found in the cell surface. With respect to regulation, the C1Q subcomplex is inhibited by sulfated molecules, such as triterpenoid sulfates, heparan sulfate, or chondroitin sulfates. In terms of biological role, core component of the complement C1 complex, a multiprotein complex that initiates the classical pathway of the complement system, a cascade of proteins that leads to phagocytosis and breakdown of pathogens and signaling that strengthens the adaptive immune system. The classical complement pathway is initiated by the C1Q subcomplex of the C1 complex, which specifically binds IgG or IgM immunoglobulins complexed with antigens, forming antigen-antibody complexes on the surface of pathogens: C1QA, together with C1QB and C1QC, specifically recognizes and binds the Fc regions of IgG or IgM via its C1q domain. Immunoglobulin-binding activates the proenzyme C1R, which cleaves C1S, initiating the proteolytic cascade of the complement system. The C1Q subcomplex is activated by a hexamer of IgG complexed with antigens, while it is activated by a pentameric IgM. The C1Q subcomplex also recognizes and binds phosphatidylserine exposed on the surface of cells undergoing programmed cell death, possibly promoting activation of the complement system. This Mus musculus (Mouse) protein is Complement C1q subcomponent subunit C.